The chain runs to 99 residues: Large ribosomal subunit protein uL23 (99 aa).

This sequence belongs to the universal ribosomal protein uL23 family. In terms of assembly, part of the 50S ribosomal subunit. Contacts protein L29, and trigger factor when it is bound to the ribosome.

Its function is as follows. One of the early assembly proteins it binds 23S rRNA. One of the proteins that surrounds the polypeptide exit tunnel on the outside of the ribosome. Forms the main docking site for trigger factor binding to the ribosome. The polypeptide is Large ribosomal subunit protein uL23 (Hyphomonas neptunium (strain ATCC 15444)).